A 402-amino-acid chain; its full sequence is Imidazolonepropionase (402 aa).

Fe(3+) contacts are provided by H66 and H68. 2 residues coordinate Zn(2+): H66 and H68. Positions 75, 138, and 171 each coordinate 4-imidazolone-5-propanoate. Position 138 (Y138) interacts with N-formimidoyl-L-glutamate. Fe(3+) is bound at residue H236. H236 is a binding site for Zn(2+). Position 239 (Q239) interacts with 4-imidazolone-5-propanoate. Residue D311 coordinates Fe(3+). D311 contacts Zn(2+). N-formimidoyl-L-glutamate is bound by residues N313 and G315. T316 lines the 4-imidazolone-5-propanoate pocket.

It belongs to the metallo-dependent hydrolases superfamily. HutI family. Zn(2+) serves as cofactor. Fe(3+) is required as a cofactor.

It is found in the cytoplasm. It carries out the reaction 4-imidazolone-5-propanoate + H2O = N-formimidoyl-L-glutamate. It functions in the pathway amino-acid degradation; L-histidine degradation into L-glutamate; N-formimidoyl-L-glutamate from L-histidine: step 3/3. In terms of biological role, catalyzes the hydrolytic cleavage of the carbon-nitrogen bond in imidazolone-5-propanoate to yield N-formimidoyl-L-glutamate. It is the third step in the universal histidine degradation pathway. In Pseudomonas aeruginosa (strain LESB58), this protein is Imidazolonepropionase.